A 343-amino-acid polypeptide reads, in one-letter code: Heat-inducible transcription repressor HrcA (343 aa).

The protein belongs to the HrcA family.

In terms of biological role, negative regulator of class I heat shock genes (grpE-dnaK-dnaJ and groELS operons). Prevents heat-shock induction of these operons. The protein is Heat-inducible transcription repressor HrcA of Halalkalibacterium halodurans (strain ATCC BAA-125 / DSM 18197 / FERM 7344 / JCM 9153 / C-125) (Bacillus halodurans).